Reading from the N-terminus, the 291-residue chain is Phytanoyl-CoA dioxygenase domain-containing protein 1 (291 aa).

Threonine 55 is modified (phosphothreonine). Residues lysine 102, methionine 141, 156–158, and tryptophan 174 each bind 2-oxoglutarate; that span reads HQD. The Fe cation site is built by histidine 156 and aspartate 158. A Fe cation-binding site is contributed by histidine 246. Residues serine 248 and arginine 257 each contribute to the 2-oxoglutarate site.

This sequence belongs to the PhyH family. PHYHD1 subfamily. Fe cation serves as cofactor.

Its function is as follows. 2-oxoglutarate(2OG)-dependent dioxygenase that catalyzes the conversion of 2-oxoglutarate to succinate and CO(2) in an iron-dependent manner. However, does not couple 2OG turnover to the hydroxylation of acyl-coenzyme A derivatives, implying that it is not directly involved in phytanoyl coenzyme-A metabolism. Does not show detectable activity towards fatty acid CoA thioesters. In Mus musculus (Mouse), this protein is Phytanoyl-CoA dioxygenase domain-containing protein 1.